Consider the following 589-residue polypeptide: Arginine--tRNA ligase (589 aa).

Residues 123-133 (ANVAKPMHVGH) carry the 'HIGH' region motif.

Belongs to the class-I aminoacyl-tRNA synthetase family. Monomer.

The protein localises to the cytoplasm. The catalysed reaction is tRNA(Arg) + L-arginine + ATP = L-arginyl-tRNA(Arg) + AMP + diphosphate. This Hyphomonas neptunium (strain ATCC 15444) protein is Arginine--tRNA ligase.